Reading from the N-terminus, the 276-residue chain is Natural cytotoxicity triggering receptor 2 (276 aa).

Positions 1 to 21 (MAWRALHPLLLLLLLFPGSQA) are cleaved as a signal peptide. The Ig-like domain maps to 22–120 (QSKAQVLQSV…IYRPSDNSVS (99 aa)). Residues 22–192 (QSKAQVLQSV…LRPGPAAPIA (171 aa)) lie on the Extracellular side of the membrane. 2 disulfides stabilise this stretch: cysteine 40–cysteine 109 and cysteine 55–cysteine 63. 2 stretches are compositionally biased toward polar residues: residues 138-156 (TSWTPRDLVSSQTQTQSCV) and 167-183 (ESPSTIPVPSQPQNSTL). The interval 138–184 (TSWTPRDLVSSQTQTQSCVPPTAGARQAPESPSTIPVPSQPQNSTLR) is disordered. The N-linked (GlcNAc...) asparagine glycan is linked to asparagine 180. Residues 193–213 (LVPVFCGLLVAKSLVLSALLV) form a helical membrane-spanning segment. Over 214 to 276 (WWGDIWWKTM…ISDDDDEHTL (63 aa)) the chain is Cytoplasmic.

This sequence belongs to the natural cytotoxicity receptor (NCR) family. Interacts with TYROBP/DAP12. Interacts with KMT2E isoform NKp44L. As to expression, selectively expressed by activated NK cells and by in vitro cultured (i.e. activated) TCRg/d lymphoid cells.

It is found in the cell membrane. Cytotoxicity-activating receptor that may contribute to the increased efficiency of activated natural killer (NK) cells to mediate tumor cell lysis. The chain is Natural cytotoxicity triggering receptor 2 (NCR2) from Homo sapiens (Human).